Consider the following 616-residue polypeptide: Dihydroxy-acid dehydratase (616 aa).

Residue D81 participates in Mg(2+) binding. Position 122 (C122) interacts with [2Fe-2S] cluster. Mg(2+) contacts are provided by D123 and K124. K124 carries the post-translational modification N6-carboxylysine. C195 contacts [2Fe-2S] cluster. Mg(2+) is bound at residue E491. The active-site Proton acceptor is the S517.

This sequence belongs to the IlvD/Edd family. In terms of assembly, homodimer. Requires [2Fe-2S] cluster as cofactor. It depends on Mg(2+) as a cofactor.

It catalyses the reaction (2R)-2,3-dihydroxy-3-methylbutanoate = 3-methyl-2-oxobutanoate + H2O. The enzyme catalyses (2R,3R)-2,3-dihydroxy-3-methylpentanoate = (S)-3-methyl-2-oxopentanoate + H2O. Its pathway is amino-acid biosynthesis; L-isoleucine biosynthesis; L-isoleucine from 2-oxobutanoate: step 3/4. It participates in amino-acid biosynthesis; L-valine biosynthesis; L-valine from pyruvate: step 3/4. Functionally, functions in the biosynthesis of branched-chain amino acids. Catalyzes the dehydration of (2R,3R)-2,3-dihydroxy-3-methylpentanoate (2,3-dihydroxy-3-methylvalerate) into 2-oxo-3-methylpentanoate (2-oxo-3-methylvalerate) and of (2R)-2,3-dihydroxy-3-methylbutanoate (2,3-dihydroxyisovalerate) into 2-oxo-3-methylbutanoate (2-oxoisovalerate), the penultimate precursor to L-isoleucine and L-valine, respectively. In Escherichia coli O8 (strain IAI1), this protein is Dihydroxy-acid dehydratase.